The primary structure comprises 418 residues: Glutamyl-tRNA reductase (418 aa).

Substrate-binding positions include 49–52 (TCNR), Ser-109, 114–116 (EPQ), and Gln-120. Cys-50 functions as the Nucleophile in the catalytic mechanism. NADP(+) is bound at residue 189–194 (GAGETI).

Belongs to the glutamyl-tRNA reductase family. As to quaternary structure, homodimer.

It catalyses the reaction (S)-4-amino-5-oxopentanoate + tRNA(Glu) + NADP(+) = L-glutamyl-tRNA(Glu) + NADPH + H(+). Its pathway is porphyrin-containing compound metabolism; protoporphyrin-IX biosynthesis; 5-aminolevulinate from L-glutamyl-tRNA(Glu): step 1/2. Catalyzes the NADPH-dependent reduction of glutamyl-tRNA(Glu) to glutamate 1-semialdehyde (GSA). The chain is Glutamyl-tRNA reductase from Escherichia fergusonii (strain ATCC 35469 / DSM 13698 / CCUG 18766 / IAM 14443 / JCM 21226 / LMG 7866 / NBRC 102419 / NCTC 12128 / CDC 0568-73).